A 56-amino-acid chain; its full sequence is Large ribosomal subunit protein bL33 (56 aa).

It belongs to the bacterial ribosomal protein bL33 family.

In Aliarcobacter butzleri (strain RM4018) (Arcobacter butzleri), this protein is Large ribosomal subunit protein bL33.